Consider the following 336-residue polypeptide: 4-hydroxy-2-oxovalerate aldolase (336 aa).

In terms of domain architecture, Pyruvate carboxyltransferase spans 4–254; sequence PRLTDTTLRD…NPGLDVLALM (251 aa). Residue 12–13 participates in substrate binding; sequence RD. D13 is a Mn(2+) binding site. H16 (proton acceptor) is an active-site residue. Substrate is bound by residues S166 and H193. Mn(2+) is bound by residues H193 and H195. Y284 provides a ligand contact to substrate.

It belongs to the 4-hydroxy-2-oxovalerate aldolase family.

The enzyme catalyses (S)-4-hydroxy-2-oxopentanoate = acetaldehyde + pyruvate. This is 4-hydroxy-2-oxovalerate aldolase from Roseiflexus castenholzii (strain DSM 13941 / HLO8).